Consider the following 341-residue polypeptide: NADH-quinone oxidoreductase subunit H (341 aa).

Transmembrane regions (helical) follow at residues 4–24 (LVNILFILVPLLLSVAYLTYF), 38–58 (PSVVGPFGLLQPFADAIKLLI), 70–90 (ILFIMAPMLTFILALIAWAVI), 115–135 (VGVLYVLAISSLGVYGVIIAG), 161–181 (IGLIVAAVVITTGTLNLGEMV), 187–207 (MPFWVDLLLMPIGIIFFISLL), 239–259 (LFFLGEYANMILASAMMTIFF), 275–295 (IPGLIWFVLKIVILLFIFIWI), and 314–334 (VFLPISVLWVILISGVLLFTG).

The protein belongs to the complex I subunit 1 family. As to quaternary structure, NDH-1 is composed of 14 different subunits. Subunits NuoA, H, J, K, L, M, N constitute the membrane sector of the complex.

It is found in the cell membrane. The enzyme catalyses a quinone + NADH + 5 H(+)(in) = a quinol + NAD(+) + 4 H(+)(out). Functionally, NDH-1 shuttles electrons from NADH, via FMN and iron-sulfur (Fe-S) centers, to quinones in the respiratory chain. The immediate electron acceptor for the enzyme in this species is believed to be ubiquinone. Couples the redox reaction to proton translocation (for every two electrons transferred, four hydrogen ions are translocated across the cytoplasmic membrane), and thus conserves the redox energy in a proton gradient. This subunit may bind ubiquinone. This Wolbachia pipientis wMel protein is NADH-quinone oxidoreductase subunit H.